The chain runs to 173 residues: N-alpha-acetyltransferase 20 (173 aa).

Positions 2 to 151 constitute an N-acetyltransferase domain; that stretch reads TTIRRFVCDD…DALDMRKALP (150 aa).

The protein belongs to the acetyltransferase family. ARD1 subfamily.

Seems to be involved in N-acetylation. In Dictyostelium discoideum (Social amoeba), this protein is N-alpha-acetyltransferase 20 (nat5).